The chain runs to 303 residues: MSATMRAEIDPLAHSATVDEMVEAITKGDDSVTTIVDDLVWHATPRFVTEVREVPGLPPSFTTTSVTDMRVDASSEKLMLTLDGQEGSEISCETYMRSCLDLPAFKGFSLFVVTPLEDRVNVLGVAPVILSHRLVLYRPTDLIDFTLCIIQMYLENCSTKRATSSLFVQIECILRNISKTITPLLKMRRLMYIGATWTLNTLMCVTNHNPFDQARVLPNYMMAKMLLGQKSNTPAILDAIYSAGYRQTLSKRPITPCPSGVLRCNKAHLNAPLCTKVVADTLYSWWTATDEKPVPESIYVLYD.

The protein belongs to the herpesviridae cytoplasmic envelopment protein 1 family.

The protein resides in the virion. The protein localises to the virion tegument. It localises to the host cytoplasm. It is found in the host Golgi apparatus. In terms of biological role, plays a critical role in cytoplasmic virus egress. Participates in the final step of tegumentation and envelope acquisition within the host cytoplasm. The sequence is that of Cytoplasmic envelopment protein 1 from Equine herpesvirus 1 (strain Ab4p) (EHV-1).